Consider the following 66-residue polypeptide: Large ribosomal subunit protein bL33c (66 aa).

The protein belongs to the bacterial ribosomal protein bL33 family.

Its subcellular location is the plastid. The protein resides in the chloroplast. This Morus indica (Mulberry) protein is Large ribosomal subunit protein bL33c.